The primary structure comprises 586 residues: Arginine--tRNA ligase (586 aa).

Residues 128-138 (ANPTGPLHVGH) carry the 'HIGH' region motif.

The protein belongs to the class-I aminoacyl-tRNA synthetase family. In terms of assembly, monomer.

Its subcellular location is the cytoplasm. It catalyses the reaction tRNA(Arg) + L-arginine + ATP = L-arginyl-tRNA(Arg) + AMP + diphosphate. This chain is Arginine--tRNA ligase, found in Thioalkalivibrio sulfidiphilus (strain HL-EbGR7).